Reading from the N-terminus, the 1404-residue chain is MDPVTQAPAPEGVDAPEIDESLQPFEINLYLPKRPLIPSAAASANGLPETPSPLKVAVTPQETLNDLRVTITDSPEGYWLGAFCFRKPLASPNSTAKGGKVQLGERVPEWTELREIFEGVDKDKRELHVTHVPFNEADARAHVQRLRDLLSGGAADPSAIGVDAALSVQDAVRNPQEWQQDAARQNANGRAVTKKGVNDAAEASSELPLPLVDWAGWPSVTSIDLIPQVARRPRQLPVCVRQLSLASWNPPPQHCKLNGHLLYLQVGTLEGEVIFVTASTHGFYVNRSSGARFDPSPRPDGQDFASCSLFDLLCGFSPLFLSSFSKLFNDPLSSRDYFSAVPVTNALPAFPWLARNHTHHADALRSQAAFLLTGATSADALEGTRDWNDELQSARELPRTTLSERLMRDRVLNRIYSEFTQAAARAIPKVAAGEVQAMNPMDKRDAQMFIVNNLFISKGADGVDLYPHMGGDEAAHVAVGKDVQGVKTLNSLDVGGLCLLGTIVVDWKGERWVAQSVVPGLFRRRDDADELPEADGETTELAEAAPEKKSPEAKLAQSNKADLNDDTQVVYGGVEGPEVIRDNAAFHKLFHQVAQTLHLNEHQVEDAKGIKHSLWLSVDSKGLRGADGRRYVLDLARLNPVDINWLENDIDGAIHGSSSSPNQDAHYPHRMTLLRPELLEIYWDSEFRKWARAKLAARQEAKAAKDAKAKEAASKEDGEKTEAPEVEAEEPERLDSSEFKLTFNPDAFVEFKVADTLAEEHSKVITPITDESDASIAAVRQASDFLRKVAIPRFVTDVAAGLFTAADGGALSRQMHARGINVRYLGYVARLCSPEAKQELDQELIQKAGPGHEGFLNAFRLTVLQEMVLRASKRVLRGLIRDVEQVNVAACVSHFLNCLVGDKVNAHPKARPSVTPLSDVADAAWTKLTPETLREELKAEIRKRFRFELPASFFEQELRRAQLLREVALRTGIQLQLQEYVLEGKLADADGVVSDGCHGESQTNGNTTNKKNSKGKKKGGNEQQNGVKKSNVGAAAAKPTKAARATSFEPEDVLNLVPMVKDSTPKSTLAEEAFEAGRISISRGDRELGLELLLEGVSFHEQVYGLVHPEVARCYALFATIVHHLAGVAAMERAESINQAKSENKEITEADLPVVNEHLSMANAVRYQRQAVTVSERTLGLDHPETLNQYMNLAVLERSAGNTRESLLCQRRVLELWSLLHGQHHPDCINALSNVALTLQNARLFEASLRVYRSAHELALTLFGADSIHTANLAHELSQAYTLAGDLKTALAVEKEAWRVFEERLGKDDAQTKESEAFCSSLAASAVRVAKLEKEASERQARLPASRRGNSNAGGGAAAITGAGTTASGNGTANKSLDEIVRFIQGGSNGSVAKAKGKSKASRK.

A Clu domain is found at 357-646 (HTHHADALRS…RLNPVDINWL (290 aa)). The segment covering 528–540 (ADELPEADGETTE) has biased composition (acidic residues). 4 disordered regions span residues 528–561 (ADELPEADGETTELAEAAPEKKSPEAKLAQSNKA), 706–735 (DAKAKEAASKEDGEKTEAPEVEAEEPERLD), 996–1046 (GCHG…ARAT), and 1337–1372 (SERQARLPASRRGNSNAGGGAAAITGAGTTASGNGT). The segment covering 706–723 (DAKAKEAASKEDGEKTEA) has biased composition (basic and acidic residues). 2 stretches are compositionally biased toward low complexity: residues 1021–1046 (NEQQNGVKKSNVGAAAAKPTKAARAT) and 1358–1372 (AAITGAGTTASGNGT).

This sequence belongs to the CLU family. May associate with the eukaryotic translation initiation factor 3 (eIF-3) complex.

The protein resides in the cytoplasm. Its function is as follows. mRNA-binding protein involved in proper cytoplasmic distribution of mitochondria. The chain is Clustered mitochondria protein homolog from Mycosarcoma maydis (Corn smut fungus).